The chain runs to 118 residues: Large ribosomal subunit protein uL18 (118 aa).

It belongs to the universal ribosomal protein uL18 family. As to quaternary structure, part of the 50S ribosomal subunit; part of the 5S rRNA/L5/L18/L25 subcomplex. Contacts the 5S and 23S rRNAs.

This is one of the proteins that bind and probably mediate the attachment of the 5S RNA into the large ribosomal subunit, where it forms part of the central protuberance. This Campylobacter concisus (strain 13826) protein is Large ribosomal subunit protein uL18.